The sequence spans 252 residues: MTTRRKKIYEGKAKILYEGPEPGTLIQYFKDDATAFNAQKKAILEGKGVINNRISEYIMTRLNGIGVQNHFIRRLNLREQLIKEVEIVPLEVVVRNIAAGSIATRLGLTEGQPLPRSIIEFYYKDDKLGDPMVTEEHITAFNWAATQEIDDMMAMALRVNDYLSGLFAGVGITLVDFKVEFGRVYEGDFSRVILADEISPDSCRLWDTVTNEKLDKDRFRRDLGNVIESYTEVARRLGIMKEMPTVIQGGVH.

It belongs to the SAICAR synthetase family.

It catalyses the reaction 5-amino-1-(5-phospho-D-ribosyl)imidazole-4-carboxylate + L-aspartate + ATP = (2S)-2-[5-amino-1-(5-phospho-beta-D-ribosyl)imidazole-4-carboxamido]succinate + ADP + phosphate + 2 H(+). The protein operates within purine metabolism; IMP biosynthesis via de novo pathway; 5-amino-1-(5-phospho-D-ribosyl)imidazole-4-carboxamide from 5-amino-1-(5-phospho-D-ribosyl)imidazole-4-carboxylate: step 1/2. The chain is Phosphoribosylaminoimidazole-succinocarboxamide synthase 1 (purC1) from Caulobacter vibrioides (strain ATCC 19089 / CIP 103742 / CB 15) (Caulobacter crescentus).